Consider the following 192-residue polypeptide: Xanthine phosphoribosyltransferase (192 aa).

Residues leucine 20 and asparagine 27 each coordinate xanthine. 5-phospho-alpha-D-ribose 1-diphosphate is bound at residue 128–132 (ANGQA). Lysine 156 is a xanthine binding site.

The protein belongs to the purine/pyrimidine phosphoribosyltransferase family. Xpt subfamily. Homodimer.

The protein localises to the cytoplasm. It catalyses the reaction XMP + diphosphate = xanthine + 5-phospho-alpha-D-ribose 1-diphosphate. The protein operates within purine metabolism; XMP biosynthesis via salvage pathway; XMP from xanthine: step 1/1. Converts the preformed base xanthine, a product of nucleic acid breakdown, to xanthosine 5'-monophosphate (XMP), so it can be reused for RNA or DNA synthesis. The polypeptide is Xanthine phosphoribosyltransferase (Ligilactobacillus salivarius (strain UCC118) (Lactobacillus salivarius)).